The primary structure comprises 500 residues: L-arabinose isomerase (500 aa).

Mn(2+)-binding residues include E306, E333, H350, and H450.

This sequence belongs to the arabinose isomerase family. As to quaternary structure, homohexamer. Requires Mn(2+) as cofactor.

It carries out the reaction beta-L-arabinopyranose = L-ribulose. It participates in carbohydrate degradation; L-arabinose degradation via L-ribulose; D-xylulose 5-phosphate from L-arabinose (bacterial route): step 1/3. Catalyzes the conversion of L-arabinose to L-ribulose. This Escherichia coli (strain 55989 / EAEC) protein is L-arabinose isomerase.